A 953-amino-acid chain; its full sequence is Translation initiation factor IF-2 (953 aa).

Disordered stretches follow at residues 51-242 and 279-363; these read SKAS…QEAK and TKLK…TERK. Composition is skewed to basic and acidic residues over residues 80-89 and 98-111; these read TGSEHVEKTQ and FKAE…EQAA. Positions 131-140 are enriched in polar residues; sequence QPNNHQTNEQ. The segment covering 149 to 188 has biased composition (basic and acidic residues); that stretch reads SQGDTNDKRIERKASNVSPRHDNHQLVGDRNRSFAKENHK. Residues 191–207 show a composition bias toward polar residues; sequence RFTNQKKQGRQEPQSKS. A compositionally biased stretch (basic and acidic residues) spans 229–242; that stretch reads RQSETRFRAQQEAK. The segment covering 282–291 has biased composition (polar residues); it reads KSSNISAKST. A compositionally biased stretch (basic and acidic residues) spans 300–317; that stretch reads ARPEKNRELTHHSQEGQK. Positions 322–338 are enriched in low complexity; the sequence is SWNSQNQVRNQKNSNWN. Residues 339 to 348 are compositionally biased toward basic residues; that stretch reads KNKKTKKGKN. The 170-residue stretch at 454–623 folds into the tr-type G domain; that stretch reads ERAPVVTIMG…LLVAEVEELK (170 aa). The interval 463–470 is G1; sequence GHVDHGKT. Residue 463–470 participates in GTP binding; that stretch reads GHVDHGKT. Positions 488–492 are G2; it reads GITQH. A G3 region spans residues 509–512; sequence DTPG. GTP-binding positions include 509–513 and 563–566; these read DTPGH and NKID. The G4 stretch occupies residues 563–566; the sequence is NKID. A G5 region spans residues 599–601; the sequence is SAK.

This sequence belongs to the TRAFAC class translation factor GTPase superfamily. Classic translation factor GTPase family. IF-2 subfamily.

It localises to the cytoplasm. Functionally, one of the essential components for the initiation of protein synthesis. Protects formylmethionyl-tRNA from spontaneous hydrolysis and promotes its binding to the 30S ribosomal subunits. Also involved in the hydrolysis of GTP during the formation of the 70S ribosomal complex. This Streptococcus pyogenes serotype M49 (strain NZ131) protein is Translation initiation factor IF-2.